We begin with the raw amino-acid sequence, 321 residues long: tRNA dimethylallyltransferase (321 aa).

ATP is bound at residue 25–32 (GPTASGKS). Residue 27–32 (TASGKS) participates in substrate binding. The segment at 50 to 53 (DSMQ) is interaction with substrate tRNA.

The protein belongs to the IPP transferase family. In terms of assembly, monomer. Mg(2+) serves as cofactor.

It carries out the reaction adenosine(37) in tRNA + dimethylallyl diphosphate = N(6)-dimethylallyladenosine(37) in tRNA + diphosphate. Its function is as follows. Catalyzes the transfer of a dimethylallyl group onto the adenine at position 37 in tRNAs that read codons beginning with uridine, leading to the formation of N6-(dimethylallyl)adenosine (i(6)A). The chain is tRNA dimethylallyltransferase from Rhodopseudomonas palustris (strain ATCC BAA-98 / CGA009).